Reading from the N-terminus, the 1028-residue chain is Protein SMAX1-LIKE 5 (1028 aa).

Positions 8–199 (IQQTLTTEAA…CVEDCSVSSV (192 aa)) constitute a Clp R domain. Repeat stretches follow at residues 12-102 (LTTE…LNRL) and 116-199 (LANA…VSSV). Residues 871-875 (LDLNI) carry the EAR motif.

It belongs to the ClpA/ClpB family. In terms of assembly, interacts probably with TPL/TPR in an EAR-motif dependent manner. In terms of tissue distribution, detected in roots, seedlings and axillary branches.

In terms of biological role, may function in a transcriptional corepressor complex. In Arabidopsis thaliana (Mouse-ear cress), this protein is Protein SMAX1-LIKE 5.